The chain runs to 117 residues: Putative membrane protein insertion efficiency factor (117 aa).

Belongs to the UPF0161 family.

It localises to the cell inner membrane. In terms of biological role, could be involved in insertion of integral membrane proteins into the membrane. This is Putative membrane protein insertion efficiency factor from Nitrobacter winogradskyi (strain ATCC 25391 / DSM 10237 / CIP 104748 / NCIMB 11846 / Nb-255).